A 341-amino-acid polypeptide reads, in one-letter code: Serine/threonine-protein kinase pdik1l (341 aa).

Residues 8–332 (YELIQEVGRG…FELELRLVRI (325 aa)) enclose the Protein kinase domain. An ATP-binding site is contributed by 14–22 (VGRGSYGVV). Aspartate 164 functions as the Proton acceptor in the catalytic mechanism.

The protein belongs to the protein kinase superfamily. Ser/Thr protein kinase family.

It is found in the nucleus. The catalysed reaction is L-seryl-[protein] + ATP = O-phospho-L-seryl-[protein] + ADP + H(+). It catalyses the reaction L-threonyl-[protein] + ATP = O-phospho-L-threonyl-[protein] + ADP + H(+). In Danio rerio (Zebrafish), this protein is Serine/threonine-protein kinase pdik1l (pdik1l).